A 187-amino-acid polypeptide reads, in one-letter code: Aminodeoxychorismate synthase component 2 (187 aa).

Positions 1–187 (MILLIDNYDS…HQLLANFLHR (187 aa)) constitute a Glutamine amidotransferase type-1 domain. Catalysis depends on residues Cys-79, His-168, and Glu-170.

In terms of assembly, monomer. Heterodimer consisting of two non-identical subunits: a glutamine amidotransferase subunit (PabA) and a aminodeoxychorismate synthase subunit (PabB).

The catalysed reaction is chorismate + L-glutamine = 4-amino-4-deoxychorismate + L-glutamate. Its pathway is cofactor biosynthesis; tetrahydrofolate biosynthesis; 4-aminobenzoate from chorismate: step 1/2. Its activity is regulated as follows. Inhibited by 6-diazo-5-oxo-L-norleucine (DON). The inhibition is competitive with glutamine, but uncompetitive with chorismate. Its function is as follows. Part of a heterodimeric complex that catalyzes the two-step biosynthesis of 4-amino-4-deoxychorismate (ADC), a precursor of p-aminobenzoate (PABA) and tetrahydrofolate. In the first step, a glutamine amidotransferase (PabA) generates ammonia as a substrate that, along with chorismate, is used in the second step, catalyzed by aminodeoxychorismate synthase (PabB) to produce ADC. PabA converts glutamine into glutamate only in the presence of stoichiometric amounts of PabB. In Escherichia coli (strain K12), this protein is Aminodeoxychorismate synthase component 2.